The primary structure comprises 300 residues: MYLRDFHELAPSQTGKGYEVFFVVGFTKAGLKLGRLVLVNKRYLIQKKGCVTIPNKWMYWDPFQAFVVHDREYLQIFFRSLPEVIVNQLCLTHRFPQVSGSFTREICGFATDWIRNLVVSLDPRSEARLGLQQRLSLVDHLKTTFPDDYLDLRQLPPSTGGLYTTVSTAEMFNPTGTPDFLAAFDALFEEGGGTHKPPIQFPTVRFDKCEGTCEAADHIHELTRRIIGEVRRVYISNATGKVIPLLVVLTAVITAENRGVEVPERVGARPIHATGNIHFDTVLSYVVQMMYLGKVRVCAP.

This is an uncharacterized protein from Ictalurid herpesvirus 1 (strain Auburn) (IcHV-1).